Consider the following 705-residue polypeptide: Polyribonucleotide nucleotidyltransferase (705 aa).

Mg(2+) is bound by residues D487 and D493. The region spanning 554–613 is the KH domain; the sequence is PKILTMTINPDKIRDVIGPSGKQINKIIEETGVKIDIEQDGTIFISSTDESGNQKAKKII. The region spanning 623-691 is the S1 motif domain; that stretch reads GQLYLGKVKR…KQGRVNLSRK (69 aa).

The protein belongs to the polyribonucleotide nucleotidyltransferase family. Homodimer. Component of a possible RNA degradosome complex composed of rny, rnjA, rnjB, pnp, pfkA and eno (although rnjA and rnjB's presence is unclear). RNA helicase CshA may also be a member of this complex. Mg(2+) is required as a cofactor.

It is found in the cytoplasm. The catalysed reaction is RNA(n+1) + phosphate = RNA(n) + a ribonucleoside 5'-diphosphate. Its function is as follows. Involved in mRNA degradation. Catalyzes the phosphorolysis of single-stranded polyribonucleotides processively in the 3'- to 5'-direction. Necessary for competence development in Bacillus subtilis. May be necessary for modification of the srfA transcript (stabilization or translation activation). Involved in processing precursor type I toxin-antitoxin RNAs antitoxin SR4 and SR5 RNAs to their mature forms. The polypeptide is Polyribonucleotide nucleotidyltransferase (Bacillus subtilis (strain 168)).